Reading from the N-terminus, the 686-residue chain is Methionine--tRNA ligase (686 aa).

The 'HIGH' region motif lies at 15–25; the sequence is PYANGSIHLGH. Zn(2+) contacts are provided by Cys-146, Cys-149, Cys-159, and Cys-162. Residues 332–336 carry the 'KMSKS' region motif; the sequence is KMSKS. ATP is bound at residue Lys-335. Positions 585-686 constitute a tRNA-binding domain; sequence AFEAVDMRIA…EGAQPGMRVM (102 aa).

Belongs to the class-I aminoacyl-tRNA synthetase family. MetG type 1 subfamily. As to quaternary structure, homodimer. The cofactor is Zn(2+).

The protein resides in the cytoplasm. The enzyme catalyses tRNA(Met) + L-methionine + ATP = L-methionyl-tRNA(Met) + AMP + diphosphate. In terms of biological role, is required not only for elongation of protein synthesis but also for the initiation of all mRNA translation through initiator tRNA(fMet) aminoacylation. The polypeptide is Methionine--tRNA ligase (Aliivibrio salmonicida (strain LFI1238) (Vibrio salmonicida (strain LFI1238))).